A 668-amino-acid polypeptide reads, in one-letter code: DNA mismatch repair protein MutL (668 aa).

It belongs to the DNA mismatch repair MutL/HexB family.

Its function is as follows. This protein is involved in the repair of mismatches in DNA. It is required for dam-dependent methyl-directed DNA mismatch repair. May act as a 'molecular matchmaker', a protein that promotes the formation of a stable complex between two or more DNA-binding proteins in an ATP-dependent manner without itself being part of a final effector complex. The protein is DNA mismatch repair protein MutL of Limosilactobacillus reuteri (strain DSM 20016) (Lactobacillus reuteri).